The primary structure comprises 233 residues: Large ribosomal subunit protein uL1 (233 aa).

This sequence belongs to the universal ribosomal protein uL1 family. In terms of assembly, part of the 50S ribosomal subunit.

Its function is as follows. Binds directly to 23S rRNA. The L1 stalk is quite mobile in the ribosome, and is involved in E site tRNA release. Functionally, protein L1 is also a translational repressor protein, it controls the translation of the L11 operon by binding to its mRNA. This is Large ribosomal subunit protein uL1 from Aeromonas hydrophila subsp. hydrophila (strain ATCC 7966 / DSM 30187 / BCRC 13018 / CCUG 14551 / JCM 1027 / KCTC 2358 / NCIMB 9240 / NCTC 8049).